The sequence spans 732 residues: E3 ubiquitin-protein ligase DCST1 (732 aa).

The Cytoplasmic segment spans residues 1–46 (MAFLSSTLHSLGIFEKISRIKEVLKNRLLDLTKRRDQAREQQRKRP). The helical transmembrane segment at 47 to 67 (HTIIQGLLLWSLPVSWIRFLW) threads the bilayer. Residues 68 to 76 (RQPGEFPVT) are Extracellular-facing. A helical membrane pass occupies residues 77–97 (AFLLGAGTGGLLAIGLFQLLV). The Cytoplasmic portion of the chain corresponds to 98–107 (NPMNIYEEQK). Residues 108-128 (VVALYCLASLGAIGWGTSPHI) form a helical membrane-spanning segment. Over 129-394 (RCASLLLVPK…VRDYVRQQET (266 aa)) the chain is Extracellular. Asparagine 184, asparagine 217, asparagine 346, and asparagine 374 each carry an N-linked (GlcNAc...) asparagine glycan. The chain crosses the membrane as a helical span at residues 395 to 415 (YLQWAMGLLHVLLSCTFLLVF). Over 416 to 489 (HSAFSYMDHY…RYVIRELLET (74 aa)) the chain is Cytoplasmic. A helical membrane pass occupies residues 490–510 (LPIVLLLLVLCAIDWALYSVF). Residues 511-576 (DTIRQHSFVQ…PQPISLNARD (66 aa)) are Extracellular-facing. Asparagine 551 is a glycosylation site (N-linked (GlcNAc...) asparagine). Residues 577-597 (YFKASLPTLLLVCLCLAQAFG) traverse the membrane as a helical segment. Topologically, residues 598 to 732 (YRLRRVIAAF…DSNDDAVYGD (135 aa)) are cytoplasmic. The RING-type; degenerate zinc-finger motif lies at 672–711 (CVVCQAMETPDSYVCPTPDCKALYCRSCWDDMQRLCPVCT).

Interacts with STAT2; the interaction results in STAT2 'Lys-48'-linked ubiquitination leading to its proteasomal degradation. Interacts with DCST2. Expressed in testis.

It localises to the cell membrane. The protein resides in the cytoplasmic vesicle. Its subcellular location is the secretory vesicle. The protein localises to the acrosome membrane. The enzyme catalyses S-ubiquitinyl-[E2 ubiquitin-conjugating enzyme]-L-cysteine + [acceptor protein]-L-lysine = [E2 ubiquitin-conjugating enzyme]-L-cysteine + N(6)-ubiquitinyl-[acceptor protein]-L-lysine.. The protein operates within protein modification; protein ubiquitination. Its function is as follows. E3 ubiquitin-protein ligase which mediates 'Lys-48'-linked ubiquitination of STAT2 and induces its proteasomal degradation thereby negatively regulating type-I-interferon signaling. Essential sperm cell-surface protein required for sperm-egg fusion and fertilization. In Mus musculus (Mouse), this protein is E3 ubiquitin-protein ligase DCST1 (Dcst1).